The sequence spans 612 residues: MAEQKTSGRRLRQPIVVVLGHVDHGKTTLLDKIRGTTVAAKEPGLITQHVGASFVPASVIEKLAEPLKKIIPFKLIIPGLLFIDTPGHELFANLRRRGGSVADFAILVVDINEGFQPQTYESIEILRQRRVPFVVAANKIDKIPGWRANPDTPFLISLQKQAQRVREELERRLWDNIISKLYELGFQADRFDRIRDFTRTVAVIPISAKTGEGIAELLAVLAGLTQRYLQHRLRFAEGPAKGVILEIREQPGLGTAADVVIYDGVLRKGDIIVTGGLNGPVITHVRALLMPKPLQEIRVAKRELEPVEEVYAAAGVRIVAPGLEEAIAGAPVFVARDEGEAKQLAEKVRREIEALRIKTEAEGVIVKADTLGSLEAMIEALRKRDIPIRYADVGPVAKRDVIEAVASRELNKFYGVILAFNVKVLPEAEEEAKKHGITIFTNNVIYRLLEDFEKWYKEQVEAERRKELEKLVRPGKIRLLPGYVFRRSNPAIVGVEVLGGVIKPGYPLMREDGKRIGTIHQIQDKGKVIHEARAGMAVAISIRGHVMVGRHIDEGDVLYTDIPEQHAVLWLTKFKSELTDDEMVVLKEIIKIKRKQNPAYAVVLGKPQGAKP.

The 219-residue stretch at 11–229 (LRQPIVVVLG…VLAGLTQRYL (219 aa)) folds into the tr-type G domain. The segment at 20-27 (GHVDHGKT) is G1. Position 20 to 27 (20 to 27 (GHVDHGKT)) interacts with GTP. The interval 45 to 49 (LITQH) is G2. The interval 84 to 87 (DTPG) is G3. Residues 84–88 (DTPGH) and 138–141 (NKID) each bind GTP. Residues 138–141 (NKID) form a G4 region. The tract at residues 207–209 (SAK) is G5.

It belongs to the TRAFAC class translation factor GTPase superfamily. Classic translation factor GTPase family. IF-2 subfamily.

Functionally, function in general translation initiation by promoting the binding of the formylmethionine-tRNA to ribosomes. Seems to function along with eIF-2. The polypeptide is Probable translation initiation factor IF-2 (Hyperthermus butylicus (strain DSM 5456 / JCM 9403 / PLM1-5)).